We begin with the raw amino-acid sequence, 63 residues long: UPF0434 protein BAV2101 (63 aa).

Belongs to the UPF0434 family.

The sequence is that of UPF0434 protein BAV2101 from Bordetella avium (strain 197N).